Consider the following 209-residue polypeptide: Ribosomal RNA large subunit methyltransferase E (209 aa).

Residues G63, W65, D83, D99, and D124 each coordinate S-adenosyl-L-methionine. The active-site Proton acceptor is K164.

This sequence belongs to the class I-like SAM-binding methyltransferase superfamily. RNA methyltransferase RlmE family.

It is found in the cytoplasm. It catalyses the reaction uridine(2552) in 23S rRNA + S-adenosyl-L-methionine = 2'-O-methyluridine(2552) in 23S rRNA + S-adenosyl-L-homocysteine + H(+). Its function is as follows. Specifically methylates the uridine in position 2552 of 23S rRNA at the 2'-O position of the ribose in the fully assembled 50S ribosomal subunit. The polypeptide is Ribosomal RNA large subunit methyltransferase E (Vibrio vulnificus (strain CMCP6)).